Here is a 206-residue protein sequence, read N- to C-terminus: Large ribosomal subunit protein mL40 (206 aa).

The transit peptide at 1–46 (MATAAMLCAARALRPRSWIPGTCQAQVRHTHQRASLLSFWELIPMR) directs the protein to the mitochondrion. The interval 170–190 (PFEKEGPHYTPPVPNYQAPEG) is disordered.

This sequence belongs to the mitochondrion-specific ribosomal protein mL40 family. As to quaternary structure, component of the mitochondrial ribosome large subunit (39S) which comprises a 16S rRNA and about 50 distinct proteins.

The protein resides in the mitochondrion. This chain is Large ribosomal subunit protein mL40 (Mrpl40), found in Rattus norvegicus (Rat).